The chain runs to 250 residues: ATP synthase subunit a (250 aa).

A run of 6 helical transmembrane segments spans residues 25-45 (VSFT…FFFL), 84-104 (VFFP…VIGL), 115-135 (IVVT…YGFY), 141-161 (FLHL…IVLI), 187-209 (ALKV…WLGA), and 223-243 (ELLV…IYLN).

Belongs to the ATPase A chain family. F-type ATPases have 2 components, CF(1) - the catalytic core - and CF(0) - the membrane proton channel. CF(1) has five subunits: alpha(3), beta(3), gamma(1), delta(1), epsilon(1). CF(0) has three main subunits: a(1), b(2) and c(9-12). The alpha and beta chains form an alternating ring which encloses part of the gamma chain. CF(1) is attached to CF(0) by a central stalk formed by the gamma and epsilon chains, while a peripheral stalk is formed by the delta and b chains.

Its subcellular location is the cell inner membrane. Key component of the proton channel; it plays a direct role in the translocation of protons across the membrane. The polypeptide is ATP synthase subunit a (Azorhizobium caulinodans (strain ATCC 43989 / DSM 5975 / JCM 20966 / LMG 6465 / NBRC 14845 / NCIMB 13405 / ORS 571)).